Here is a 294-residue protein sequence, read N- to C-terminus: Eukaryotic translation initiation factor 3 subunit G (294 aa).

2 disordered regions span residues 1–43 and 160–211; these read MPSA…ENKI and EDDG…RDET. Over residues 194 to 211 the composition is skewed to basic and acidic residues; that stretch reads GANRRGETMPSRSQRDET. Positions 212-290 constitute an RRM domain; the sequence is ATIRVTNLSE…LILNVEWAKP (79 aa).

This sequence belongs to the eIF-3 subunit G family. Component of the eukaryotic translation initiation factor 3 (eIF-3) complex.

Its subcellular location is the cytoplasm. Functionally, RNA-binding component of the eukaryotic translation initiation factor 3 (eIF-3) complex, which is involved in protein synthesis of a specialized repertoire of mRNAs and, together with other initiation factors, stimulates binding of mRNA and methionyl-tRNAi to the 40S ribosome. The eIF-3 complex specifically targets and initiates translation of a subset of mRNAs involved in cell proliferation. This subunit can bind 18S rRNA. This Nematostella vectensis (Starlet sea anemone) protein is Eukaryotic translation initiation factor 3 subunit G.